The chain runs to 435 residues: Citrate synthase (435 aa).

Residues His311 and Asp370 contribute to the active site.

Belongs to the citrate synthase family.

The catalysed reaction is oxaloacetate + acetyl-CoA + H2O = citrate + CoA + H(+). The protein operates within carbohydrate metabolism; tricarboxylic acid cycle; isocitrate from oxaloacetate: step 1/2. This chain is Citrate synthase (gltA), found in Rickettsia slovaca (strain 13-B).